The primary structure comprises 916 residues: Pertactin autotransporter (916 aa).

A signal peptide spans 1–37 (MNMSLSRIVKAAPLRRTTLAMALGALGALGAAPAAHA). Positions 263–265 (RGD) match the Cell attachment site; involved in adhesion to various eukaryotic cell lines motif. Repeat copies occupy residues 269 to 273 (GGAVP), 274 to 278 (GGAVP), and 279 to 283 (GGAVP). The interval 269–288 (GGAVPGGAVPGGAVPGGFGP) is 4 X 5 AA tandem repeats of G-G-A-V-P. One copy of the 4; approximate repeat lies at 284–288 (GGFGP). Positions 564–613 (SLVGAKAPPAPKPAPQPGPQPGPQPPQPPQPPQRQPEAPAPQPPAGRELS) are disordered. Residues 571-607 (PPAPKPAPQPGPQPGPQPPQPPQPPQRQPEAPAPQPP) show a composition bias toward pro residues. Positions 578 to 606 (PQPGPQPGPQPPQPPQPPQRQPEAPAPQP) are 6 X 3 AA repeats of P-Q-P. The region spanning 648-916 (LNPDAGGAWG…TFHAGYRYSW (269 aa)) is the Autotransporter domain. The Cell attachment site motif lies at 706 to 708 (RGD).

Monomer.

The protein localises to the periplasm. It is found in the secreted. The protein resides in the cell surface. It localises to the cell outer membrane. Agglutinogen that binds to eukaryotic cells; a process mediated by the R-G-D sequence. Pertactin may have a role in bacterial adhesion, and thus play a role in virulence. May contribute to the disease state of whooping cough. This chain is Pertactin autotransporter (prn), found in Bordetella bronchiseptica (strain ATCC BAA-588 / NCTC 13252 / RB50) (Alcaligenes bronchisepticus).